Here is a 114-residue protein sequence, read N- to C-terminus: rRNA-processing protein cgrA (114 aa).

Residues Met-1 to Asn-11 show a composition bias toward polar residues. The disordered stretch occupies residues Met-1–Ser-114. The span at Tyr-39 to Lys-93 shows a compositional bias: basic and acidic residues. Residues Glu-40–Arg-101 are a coiled coil. The segment covering Met-94–Ser-114 has biased composition (basic residues).

Belongs to the CGR1 family.

Its subcellular location is the nucleus. The protein localises to the nucleolus. Involved in nucleolar integrity and required for processing of the pre-rRNA for the 60S ribosome subunit. The sequence is that of rRNA-processing protein cgrA (cgrA) from Aspergillus fumigatus (strain ATCC MYA-4609 / CBS 101355 / FGSC A1100 / Af293) (Neosartorya fumigata).